Here is a 347-residue protein sequence, read N- to C-terminus: Protein RecA (347 aa).

64–71 (GPESSGKT) is a binding site for ATP.

Belongs to the RecA family.

Its subcellular location is the cytoplasm. Its function is as follows. Can catalyze the hydrolysis of ATP in the presence of single-stranded DNA, the ATP-dependent uptake of single-stranded DNA by duplex DNA, and the ATP-dependent hybridization of homologous single-stranded DNAs. It interacts with LexA causing its activation and leading to its autocatalytic cleavage. The chain is Protein RecA from Bartonella bacilliformis (strain ATCC 35685 / KC583 / Herrer 020/F12,63).